The following is a 1806-amino-acid chain: uncharacterized protein (1806 aa).

Disordered stretches follow at residues 38 to 131 (EASG…SPLF) and 158 to 282 (KAVS…KPRP). Residues 51–70 (KSPLRSPARLLPLPRLAPKP) show a composition bias toward low complexity. Phosphoserine is present on residues Ser-52, Ser-56, Ser-79, Ser-87, Ser-88, Ser-92, and Ser-128. Residues 82 to 100 (PSLRPSSTGPSPSGGLSEE) show a composition bias toward low complexity. Over residues 226–236 (DTARPLVEPRP) the composition is skewed to basic and acidic residues. Phosphoserine is present on residues Ser-244 and Ser-284. Disordered regions lie at residues 299 to 320 (RKVA…ERPR), 355 to 431 (KEKM…GGEW), 456 to 604 (SESP…PEDD), and 627 to 696 (QSGR…ELRP). Position 366 is a phosphoserine (Ser-366). The residue at position 378 (Thr-378) is a Phosphothreonine. A Phosphoserine modification is found at Ser-384. The span at 386-400 (WEEKAKLDPEPEKAA) shows a compositional bias: basic and acidic residues. Ser-404 is subject to Phosphoserine. Over residues 412-422 (ELAEVKSRVAD) the composition is skewed to basic and acidic residues. Residues 456-470 (SESPLATPASPSAAP) show a composition bias toward low complexity. 2 positions are modified to phosphoserine: Ser-458 and Ser-508. Positions 514 to 523 (LFSSSASSNE) are enriched in polar residues. Composition is skewed to basic and acidic residues over residues 524–549 (VKYE…EGHS) and 564–573 (TLRDKSRQTE). Residue Thr-600 is modified to Phosphothreonine. 2 stretches are compositionally biased toward basic and acidic residues: residues 641-652 (AHARVSEPRPRP) and 661-674 (DPPD…ENSR). Ser-749 carries the phosphoserine modification. Disordered stretches follow at residues 860-901 (QHEG…QART), 969-989 (SPHV…ALRK), and 1000-1019 (QEVN…KQGS). Residues 889–900 (RATNGPSDSQAR) show a composition bias toward polar residues. Phosphoserine occurs at positions 969 and 981. Over residues 969-978 (SPHVGHRRTD) the composition is skewed to basic and acidic residues. Residue Thr-1059 is modified to Phosphothreonine. Residues Ser-1063 and Ser-1154 each carry the phosphoserine modification. A disordered region spans residues 1134-1178 (RGSEDGPRPQSNWKESANKMSPSGGAPQTTPTLRSRPKDLPVRRK). Over residues 1142–1166 (PQSNWKESANKMSPSGGAPQTTPTL) the composition is skewed to polar residues. Thr-1163 carries the phosphothreonine modification. The segment covering 1169–1178 (RPKDLPVRRK) has biased composition (basic and acidic residues). A phosphothreonine mark is found at Thr-1179 and Thr-1185. Disordered stretches follow at residues 1216–1265 (PGEA…PASS) and 1291–1493 (KSSP…VASV). At Ser-1224 the chain carries Phosphoserine. Thr-1226 bears the Phosphothreonine mark. Composition is skewed to basic and acidic residues over residues 1244–1254 (EQRRRSLKEMP) and 1317–1331 (DPRK…DRKA). Ser-1366 is subject to Phosphoserine. Basic and acidic residues-rich tracts occupy residues 1393-1410 (DHPR…RAYS) and 1426-1437 (HEARERRREQPK). Ser-1441 carries the post-translational modification Phosphoserine. The segment covering 1462-1483 (DSHKVLPRDLEKEDAPQEKERP) has biased composition (basic and acidic residues). Phosphoserine occurs at positions 1488 and 1506. Disordered regions lie at residues 1512-1627 (QLKQ…KRVD) and 1642-1806 (ALKT…ENQV). Positions 1522 to 1531 (TEPKDTDTLV) are enriched in basic and acidic residues. A compositionally biased stretch (polar residues) spans 1537–1568 (QYGTWTEQCQSGESLATESPDSSATSTRKQPP). A phosphoserine mark is found at Ser-1555 and Ser-1662. Positions 1649-1666 (LSKRSRRRAPISHSLRRS) are enriched in basic residues. Composition is skewed to basic and acidic residues over residues 1667–1677 (RFSESESRSPL) and 1689–1714 (DSTE…ERTP). Residues Ser-1701, Ser-1757, Ser-1760, and Ser-1786 each carry the phosphoserine modification. Residues 1753 to 1764 (PQPKSPKSPFQP) show a composition bias toward low complexity.

This is an uncharacterized protein from Homo sapiens (Human).